Reading from the N-terminus, the 520-residue chain is ATP synthase subunit alpha 2 (520 aa).

ATP is bound at residue 176-183; that stretch reads GDRQTGKT.

The protein belongs to the ATPase alpha/beta chains family. As to quaternary structure, F-type ATPases have 2 components, CF(1) - the catalytic core - and CF(0) - the membrane proton channel. CF(1) has five subunits: alpha(3), beta(3), gamma(1), delta(1), epsilon(1). CF(0) has three main subunits: a(1), b(2) and c(9-12). The alpha and beta chains form an alternating ring which encloses part of the gamma chain. CF(1) is attached to CF(0) by a central stalk formed by the gamma and epsilon chains, while a peripheral stalk is formed by the delta and b chains.

The protein resides in the cell inner membrane. It catalyses the reaction ATP + H2O + 4 H(+)(in) = ADP + phosphate + 5 H(+)(out). Functionally, produces ATP from ADP in the presence of a proton gradient across the membrane. The alpha chain is a regulatory subunit. The polypeptide is ATP synthase subunit alpha 2 (Polaromonas naphthalenivorans (strain CJ2)).